Consider the following 487-residue polypeptide: FAD-dependent oxidoreductase domain-containing protein 1 (487 aa).

Residues 62 to 82 traverse the membrane as a helical segment; it reads EQADVVIIGGGILGLSVAFWL.

Associates with components of the mitochondrial respiratory chain complex I. It depends on FAD as a cofactor.

Its subcellular location is the mitochondrion inner membrane. Required for the assembly of the mitochondrial membrane respiratory chain NADH dehydrogenase (Complex I). Involved in mid-late stages of complex I assembly. The chain is FAD-dependent oxidoreductase domain-containing protein 1 (Foxred1) from Mus musculus (Mouse).